The following is a 213-amino-acid chain: Pyridoxine/pyridoxamine 5'-phosphate oxidase (213 aa).

Substrate contacts are provided by residues 8-11 (RKNY) and Lys66. Residues 61–66 (RIVLIK), 76–77 (FT), Arg82, Lys83, and Gln105 contribute to the FMN site. Substrate contacts are provided by Tyr123, Arg127, and Ser131. Residues 140–141 (QS) and Trp184 each bind FMN. 190–192 (RLH) lines the substrate pocket. Arg194 is an FMN binding site.

This sequence belongs to the pyridoxamine 5'-phosphate oxidase family. In terms of assembly, homodimer. FMN is required as a cofactor.

It carries out the reaction pyridoxamine 5'-phosphate + O2 + H2O = pyridoxal 5'-phosphate + H2O2 + NH4(+). The catalysed reaction is pyridoxine 5'-phosphate + O2 = pyridoxal 5'-phosphate + H2O2. It functions in the pathway cofactor metabolism; pyridoxal 5'-phosphate salvage; pyridoxal 5'-phosphate from pyridoxamine 5'-phosphate: step 1/1. It participates in cofactor metabolism; pyridoxal 5'-phosphate salvage; pyridoxal 5'-phosphate from pyridoxine 5'-phosphate: step 1/1. In terms of biological role, catalyzes the oxidation of either pyridoxine 5'-phosphate (PNP) or pyridoxamine 5'-phosphate (PMP) into pyridoxal 5'-phosphate (PLP). The chain is Pyridoxine/pyridoxamine 5'-phosphate oxidase from Paraburkholderia xenovorans (strain LB400).